The following is a 138-amino-acid chain: MRTLWIMAVCLIGVEGNFFQFAEMIVKMTGKEAVHSYAIYGCYCGWGGQGKPQDATDRCCFVHDCCYGTVNDCNPKMATYSYSFENGDIVCGDNNLCLKTVCECDRAAAICLGQNVNTYDKNYENYAISHCTEESEQC.

Residues M1 to G16 form the signal peptide. 7 cysteine pairs are disulfide-bonded: C42–C131, C44–C60, C59–C111, C65–C138, C66–C104, C73–C97, and C91–C102. Ca(2+) is bound by residues Y43, G45, and G47. Residue H63 is part of the active site. D64 contributes to the Ca(2+) binding site. Residue D105 is part of the active site.

Belongs to the phospholipase A2 family. Group II subfamily. D49 sub-subfamily. Heterodimer of A and B chain; non-covalently linked. The acidic protein (B chain) has phospholipase A2 activity and the A chain weakly inhibits the B chain enzymatic activity but potentiates its lethal potency. The cofactor is Ca(2+). Expressed by the venom gland.

The protein resides in the secreted. The catalysed reaction is a 1,2-diacyl-sn-glycero-3-phosphocholine + H2O = a 1-acyl-sn-glycero-3-phosphocholine + a fatty acid + H(+). Heterodimer (A and B chains): phospholipase A2 that acts as a presynaptic neurotoxin and shows a PLA2 activity of 1377 umol/min/mg. In vivo, induces edema and produces neurotoxic symptoms in mice. Also exhibits indirect hemolysis, a strong myonecrotic activity and cytotoxicity. PLA2 catalyzes the calcium-dependent hydrolysis of the 2-acyl groups in 3-sn-phosphoglycerides. Its function is as follows. Monomer: Snake venom phospholipase A2 (PLA2) that shows a PLA2 activity of 578 umol/min/mg. The polypeptide is Acidic phospholipase A2 daboiatoxin A chain (Daboia siamensis (Eastern Russel's viper)).